A 410-amino-acid chain; its full sequence is MVLSQRQRDELNRAIADYLRSNGYEEAYSVFKKEAELDMNEELDKKYAGLLEKKWTSVIRLQKKVMELESKLNEAKEEFTSGGPIGQKRDPKEWIPRPPEKYALSGHRSPVTRVIFHPVFSVMVTASEDATIKVWDYETGDFERTLKGHTDSVQDISFDHSGKLLASCSADMTIKLWDFQGFECIRTMHGHDHNVSSVAIMPNGDHIVSASRDKTIKMWEVQTGYCVKTFTGHREWVRMVRPNQDGTLIASCSNDQTVRVWVVATKECKAELREHEHVVECISWAPESSYSTISDATGSETKKSGKPGPFLLSGSRDKTIKMWDISIGMCLMTLVGHDNWVRGVQFHPGGKFILSCADDKTIRIWDYKNKRCMKTLNAHEHFVTSLDFHKTAPYVVTGSVDQTVKVWECR.

Residues 7–39 enclose the LisH domain; it reads QRDELNRAIADYLRSNGYEEAYSVFKKEAELDM. The stretch at 56–82 forms a coiled coil; the sequence is TSVIRLQKKVMELESKLNEAKEEFTSG. WD repeat units follow at residues 106–147, 148–187, 190–229, 232–271, 274–333, 336–377, and 379–410; these read GHRS…RTLK, GHTD…CIRT, GHDH…CVKT, GHRE…CKAE, EHEH…CLMT, GHDN…KTLN, and HEHF…WECR.

It belongs to the WD repeat LIS1/nudF family. In terms of assembly, can self-associate. Component of the cytosolic PAF-AH (I) heterotetrameric enzyme, which is composed of PAFAH1B1 (beta), PAFAH1B2 (alpha2) and PAFAH1B3 (alpha1) subunits. The catalytic activity of the enzyme resides in the alpha1 (PAFAH1B3) and alpha2 (PAFAH1B2) subunits, whereas the beta subunit (PAFAH1B1) has regulatory activity. Trimer formation is not essential for the catalytic activity. Interacts with dynein, dynactin, nde1 and ndel1.

It localises to the cytoplasm. Its subcellular location is the cytoskeleton. The protein localises to the microtubule organizing center. The protein resides in the centrosome. Its function is as follows. Regulatory subunit (beta subunit) of the cytosolic type I platelet-activating factor (PAF) acetylhydrolase (PAF-AH (I)), an enzyme that catalyzes the hydrolyze of the acetyl group at the sn-2 position of PAF and its analogs and participates in the PAF inactivation. Positively regulates the activity of the minus-end directed microtubule motor protein dynein. May enhance dynein-mediated microtubule sliding by targeting dynein to the microtubule plus end. Required for several dynein- and microtubule-dependent processes such as the maintenance of Golgi integrity, the peripheral transport of microtubule fragments and the coupling of the nucleus and centrosome. May be required for proliferation of neuronal precursors and neuronal migration. The protein is Lissencephaly-1 homolog (pafah1b1) of Xenopus tropicalis (Western clawed frog).